The primary structure comprises 203 residues: AFG2-interacting ribosome maturation factor (203 aa).

In terms of assembly, part of the 55LCC heterohexameric ATPase complex composed at least of AIRIM, AFG2A, AFG2B and CINP. Does not associate with pre-60S ribosomal particles. Phosphorylated on serines by CK2 kinase.

It is found in the nucleus. It localises to the cytoplasm. Its function is as follows. Part of the 55LCC heterohexameric ATPase complex which is chromatin-associated and promotes replisome proteostasis to maintain replication fork progression and genome stability. Required for replication fork progression, sister chromatid cohesion, and chromosome stability. The ATPase activity is specifically enhanced by replication fork DNA and is coupled to cysteine protease-dependent cleavage of replisome substrates in response to replication fork damage. Uses ATPase activity to process replisome substrates in S-phase, facilitating their proteolytic turnover from chromatin to ensure DNA replication and mitotic fidelity. Involved in the cytoplasmic maturation steps of pre-60S ribosomal particles by promoting the release of shuttling protein RSL24D1/RLP24 from the pre-ribosomal particles. The sequence is that of AFG2-interacting ribosome maturation factor from Homo sapiens (Human).